A 20-amino-acid chain; its full sequence is ATP synthase subunit beta, chloroplastic (20 aa).

Polar residues predominate over residues 1 to 10 (METTNESLGY). The segment at 1 to 20 (METTNESLGYTDQIIGPVLD) is disordered.

Belongs to the ATPase alpha/beta chains family. In terms of assembly, F-type ATPases have 2 components, CF(1) - the catalytic core - and CF(0) - the membrane proton channel. CF(1) has five subunits: alpha(3), beta(3), gamma(1), delta(1), epsilon(1). CF(0) has four main subunits: a(1), b(1), b'(1) and c(9-12).

It is found in the plastid. The protein resides in the chloroplast thylakoid membrane. The enzyme catalyses ATP + H2O + 4 H(+)(in) = ADP + phosphate + 5 H(+)(out). In terms of biological role, produces ATP from ADP in the presence of a proton gradient across the membrane. The catalytic sites are hosted primarily by the beta subunits. The chain is ATP synthase subunit beta, chloroplastic from Chattonella marina var. antiqua (Red tide flagellate).